A 1048-amino-acid chain; its full sequence is Histone deacetylase complex subunit SAP130 (1048 aa).

A disordered region spans residues 1-95 (MGPPRHPQAG…LQSREEKQEP (95 aa)). The span at 40–54 (TGLSQAPSQIANSGS) shows a compositional bias: polar residues. Basic and acidic residues predominate over residues 67–80 (ESGRDSEVSAREHM). Arg-232 carries the post-translational modification Omega-N-methylarginine. The residue at position 355 (Thr-355) is a Phosphothreonine. 2 positions are modified to phosphoserine: Ser-442 and Ser-465. 3 disordered regions span residues 458-477 (PISG…RSDN), 576-617 (IGTP…PEGK), and 649-687 (QTHS…SEIH). Composition is skewed to polar residues over residues 590 to 613 (GIHS…QQPQ) and 649 to 667 (QTHS…SSPR). Residue Lys-785 forms a Glycyl lysine isopeptide (Lys-Gly) (interchain with G-Cter in SUMO2) linkage. The disordered stretch occupies residues 819–871 (LSMPTSDLPPGASPRKKPRKQQHVISTEEGDMMETNSTDDEKSTAKSLLVKAE). The interactions with SIN3A and HDAC1 stretch occupies residues 836-1047 (PRKQQHVIST…KVSKLKRKEK (212 aa)). At Ser-855 the chain carries Phosphoserine. Thr-856 bears the Phosphothreonine mark. Residues Lys-864 and Lys-869 each participate in a glycyl lysine isopeptide (Lys-Gly) (interchain with G-Cter in SUMO2) cross-link. The residue at position 875 (Ser-875) is a Phosphoserine.

Belongs to the SAP130 family. As to quaternary structure, component of a mSin3A corepressor complex that contains SIN3A, SAP130, SUDS3/SAP45, ARID4B/SAP180, HDAC1 and HDAC2. Interacts (released by dead or dying cells) with CLEC4E. Post-translationally, acetylated. Sumoylated with SUMO1. Expressed in various cancer cell ines.

The protein localises to the nucleus. Its function is as follows. Acts as a transcriptional repressor. May function in the assembly and/or enzymatic activity of the mSin3A corepressor complex or in mediating interactions between the complex and other regulatory complexes. This is Histone deacetylase complex subunit SAP130 (SAP130) from Homo sapiens (Human).